The primary structure comprises 213 residues: Receptor-binding cancer antigen expressed on SiSo cells (213 aa).

The Extracellular portion of the chain corresponds to M1–F6. The chain crosses the membrane as a helical; Signal-anchor for type III membrane protein span at residues R7–C27. Residues R28–S213 are Cytoplasmic-facing. Position 36 is a phosphoserine (S36). The residue at position 41 (T41) is a Phosphothreonine. A Phosphotyrosine modification is found at Y94. A coiled-coil region spans residues Q168–G209. Basic and acidic residues predominate over residues A179–N206. The segment at A179–S213 is disordered.

Homodimer.

It is found in the golgi apparatus membrane. Functionally, may participate in suppression of cell proliferation and induces apoptotic cell death through activation of interleukin-1-beta converting enzyme (ICE)-like proteases. This chain is Receptor-binding cancer antigen expressed on SiSo cells (Ebag9), found in Rattus norvegicus (Rat).